We begin with the raw amino-acid sequence, 144 residues long: Cell division protein SepF (144 aa).

It belongs to the SepF family. As to quaternary structure, homodimer. Interacts with FtsZ.

It is found in the cytoplasm. In terms of biological role, cell division protein that is part of the divisome complex and is recruited early to the Z-ring. Probably stimulates Z-ring formation, perhaps through the cross-linking of FtsZ protofilaments. Its function overlaps with FtsA. The protein is Cell division protein SepF of Oceanobacillus iheyensis (strain DSM 14371 / CIP 107618 / JCM 11309 / KCTC 3954 / HTE831).